A 345-amino-acid chain; its full sequence is NADH-quinone oxidoreductase subunit H (345 aa).

Transmembrane regions (helical) follow at residues 14–34 (IILA…LFLV), 84–104 (FILA…VIPF), 115–135 (VAIL…IMGG), 161–181 (IGLI…GDIV), 187–207 (GWGF…LFFI), 248–268 (YIAI…GWLS), 277–297 (VLWM…VKAI), and 309–329 (LGWK…AFAA).

Belongs to the complex I subunit 1 family. NDH-1 is composed of 14 different subunits. Subunits NuoA, H, J, K, L, M, N constitute the membrane sector of the complex.

It localises to the cell inner membrane. It catalyses the reaction a quinone + NADH + 5 H(+)(in) = a quinol + NAD(+) + 4 H(+)(out). NDH-1 shuttles electrons from NADH, via FMN and iron-sulfur (Fe-S) centers, to quinones in the respiratory chain. The immediate electron acceptor for the enzyme in this species is believed to be ubiquinone. Couples the redox reaction to proton translocation (for every two electrons transferred, four hydrogen ions are translocated across the cytoplasmic membrane), and thus conserves the redox energy in a proton gradient. This subunit may bind ubiquinone. This chain is NADH-quinone oxidoreductase subunit H, found in Ruegeria pomeroyi (strain ATCC 700808 / DSM 15171 / DSS-3) (Silicibacter pomeroyi).